A 317-amino-acid polypeptide reads, in one-letter code: Probable cell division protein WhiA (317 aa).

The segment at residues 278–311 is a DNA-binding region (H-T-H motif); that stretch reads SLQGLGELLDPQVGKSGVNHRLRKIGEKADELRQ.

This sequence belongs to the WhiA family.

In terms of biological role, involved in cell division and chromosome segregation. The sequence is that of Probable cell division protein WhiA from Lachnospira eligens (strain ATCC 27750 / DSM 3376 / VPI C15-48 / C15-B4) (Eubacterium eligens).